The primary structure comprises 185 residues: MPRLFLFHLLGVCLLLNQFSRAVAAKWMDDVIKACGRELVRAQIAICGKSTLGKRSLNQEDAPLKPRPAAEIVPSLINQDTETINMMSEFVANLPQELKLTLSERQPALSELQQHVPVLKDSNLSFEEFKKIIRKRQSEATDSSPSELRSLGLDTHSRRKRQLYMTLSNKCCHIGCTKKSLAKFC.

Positions 1–24 (MPRLFLFHLLGVCLLLNQFSRAVA) are cleaved as a signal peptide. 3 disulfide bridges follow: cysteine 35-cysteine 172, cysteine 47-cysteine 185, and cysteine 171-cysteine 176. A propeptide spans 56 to 157 (SLNQEDAPLK…LRSLGLDTHS (102 aa)) (connecting peptide).

This sequence belongs to the insulin family. In terms of assembly, heterodimer of a B chain and an A chain linked by two disulfide bonds.

Its subcellular location is the secreted. Relaxin is an ovarian hormone that acts with estrogen to produce dilatation of the birth canal in many mammals. May be involved in remodeling of connective tissues during pregnancy, promoting growth of pubic ligaments and ripening of the cervix. The chain is Prorelaxin (RLN) from Macaca mulatta (Rhesus macaque).